Here is a 211-residue protein sequence, read N- to C-terminus: Shikimate kinase (211 aa).

Residues 1-23 (MNASANLCAASDNDPQPGDQEAA) are disordered. 50 to 55 (GAGKTT) serves as a coordination point for ATP. Residue threonine 54 coordinates Mg(2+). Residues aspartate 72, arginine 96, and glycine 118 each coordinate substrate. Residue arginine 156 coordinates ATP. Substrate is bound at residue arginine 175.

This sequence belongs to the shikimate kinase family. Monomer. Mg(2+) is required as a cofactor.

It is found in the cytoplasm. It carries out the reaction shikimate + ATP = 3-phosphoshikimate + ADP + H(+). Its pathway is metabolic intermediate biosynthesis; chorismate biosynthesis; chorismate from D-erythrose 4-phosphate and phosphoenolpyruvate: step 5/7. Its function is as follows. Catalyzes the specific phosphorylation of the 3-hydroxyl group of shikimic acid using ATP as a cosubstrate. This Bordetella bronchiseptica (strain ATCC BAA-588 / NCTC 13252 / RB50) (Alcaligenes bronchisepticus) protein is Shikimate kinase.